Here is a 392-residue protein sequence, read N- to C-terminus: Putative transactivator/viroplasmin protein (392 aa).

Residues 1–88 adopt a coiled-coil conformation; sequence MEDMMKQILE…NVEEQYQWKN (88 aa). The tract at residues 358–392 is disordered; that stretch reads EIEKEEPGEEKNLEDVSTDDNNEKKKIRSVIVKET.

This sequence belongs to the caulimoviridae viroplasmin family.

Its subcellular location is the host cytoplasm. In terms of biological role, enhances the translation of downstream ORFs on polycistronic mRNAs derived from cassava vein mosaic virus. The chain is Putative transactivator/viroplasmin protein from Cassava vein mosaic virus (CsVMV).